The sequence spans 362 residues: Sulfate/thiosulfate import ATP-binding protein CysA (362 aa).

The ABC transporter domain maps to 3–237 (IEIHDLSKQF…PANPFVYEFL (235 aa)). 35 to 42 (GPSGSGKT) serves as a coordination point for ATP.

Belongs to the ABC transporter superfamily. Sulfate/tungstate importer (TC 3.A.1.6) family. As to quaternary structure, the complex is composed of two ATP-binding proteins (CysA), two transmembrane proteins (CysT and CysW) and a solute-binding protein (CysP).

It is found in the cell inner membrane. It catalyses the reaction sulfate(out) + ATP + H2O = sulfate(in) + ADP + phosphate + H(+). It carries out the reaction thiosulfate(out) + ATP + H2O = thiosulfate(in) + ADP + phosphate + H(+). Functionally, part of the ABC transporter complex CysAWTP involved in sulfate/thiosulfate import. Responsible for energy coupling to the transport system. The protein is Sulfate/thiosulfate import ATP-binding protein CysA of Nitrosomonas europaea (strain ATCC 19718 / CIP 103999 / KCTC 2705 / NBRC 14298).